Reading from the N-terminus, the 1366-residue chain is Protein strawberry notch homolog 2 (1366 aa).

4 disordered regions span residues 1-24, 174-217, 614-640, and 1324-1366; these read MLAVGPAMDRDYPQHEPPPAGSLL, QEQS…KQHP, STKRKRDRGAGSKRKRRPRGRGAKAPR, and HAGP…QAPL. Residues 15 to 24 show a composition bias toward pro residues; the sequence is HEPPPAGSLL. Positions 182 to 194 are enriched in acidic residues; that stretch reads PEEEDEAEEEEAE. Residues 614–637 are compositionally biased toward basic residues; that stretch reads STKRKRDRGAGSKRKRRPRGRGAK. A compositionally biased stretch (gly residues) spans 1333–1347; sequence LGEGAGAGGAAGGGP.

The protein belongs to the SBNO family. In terms of assembly, interacts with TAL1; this interaction inhibits TAL1 occupancy of the DCSTAMP promoter, leading to the activation of the DCSTAMP promoter by the transcription factor MITF. As to expression, detected in macrophages. IL10 regulates expression in a STAT3-dependent way.

Functionally, acts as a transcriptional coregulator, that can have both coactivator and corepressor functions. Inhibits the DCSTAMP-repressive activity of TAL1, hence enhancing the access of the transcription factor MITF to the DC-STAMP promoter in osteoclast. Plays a role in bone homeostasis; required as a positive regulator in TNFSF11//RANKL-mediated osteoclast fusion via a DCSTAMP-dependent pathway. May also be required in the regulation of osteoblast differentiation. Involved in the transcriptional corepression of NF-kappaB in macrophages. Plays a role as a regulator in the pro-inflammatory cascade. This Homo sapiens (Human) protein is Protein strawberry notch homolog 2 (SBNO2).